Consider the following 294-residue polypeptide: Factor associated with metabolism and energy (294 aa).

Basic residues predominate over residues 1 to 12 (MGLGHSKAHPRV). Disordered regions lie at residues 1-28 (MGLGHSKAHPRVIKVTPLQSQETETPST) and 255-279 (FWDSSSSDSDELEKDERRPQALVRT). The N-myristoyl glycine moiety is linked to residue Gly-2. Residues 17–28 (PLQSQETETPST) show a composition bias toward polar residues. Basic and acidic residues predominate over residues 268-279 (KDERRPQALVRT).

In terms of tissue distribution, expressed in proximal tubules of the kidney.

It localises to the cell membrane. It is found in the cytoplasmic vesicle. In terms of biological role, may be involved in tuning the metabolism, energy expenditure, and excretion processes. In Mus musculus (Mouse), this protein is Factor associated with metabolism and energy.